Consider the following 277-residue polypeptide: Putative glucose-6-phosphate/phosphate-translocator-like protein 1 (277 aa).

A run of 5 helical transmembrane segments spans residues 8 to 28 (VLPS…WWAL), 46 to 66 (LWLT…VSWV), 124 to 143 (MIGF…RNIF), 153 to 173 (VSVM…VTPF), and 230 to 250 (PLKH…FIYS).

This sequence belongs to the TPT transporter family. GPT (TC 2.A.7.9) subfamily.

The protein localises to the membrane. This chain is Putative glucose-6-phosphate/phosphate-translocator-like protein 1, found in Arabidopsis thaliana (Mouse-ear cress).